A 518-amino-acid chain; its full sequence is MFIRAPNFGRKLLLTCIVAGVMIAILVSCLQFLVAWHKHEVKYDTLITDVQKYLDTYFADLKSTTDRLQPLTLDTCQQANPELTARAAFSMNVRTFVLVKDKKTFCSSATGEMDIPLNELIPALDINKNVDMAILPGTPMVPNKPAIVIWYRNPLLKNSGVFAALNLNLTPSLFYSSRQEDYDGVALIIGNTALSTFSSRLMNVNELTDMPVRETKIAGIPLTVRLYADDWTWNDVWYAFLLGGMSGTVVGLLCYYLMSVRMRPGREIMTAIKREQFYVAYQPVVDTQALRVTGLEVLLRWRHPVAGEIPPDAFINFAESQKMIVPLTQHLFELIARDAAELEKVLPVGVKFGINIAPDHLHSESFKADIQKLLTSLPAHHFQIVLEITERDMLKEQEATQLFAWLHSVGVEIAIDDFGTGHSALIYLERFTLDYLKIDRGFINAIGTETITSPVLDAVLTLAKRLNMLTVAEGVETPEQARWLSERGVNFMQGYWISRPLPLDDFVRWLKKPYTPQW.

A run of 2 helical transmembrane segments spans residues 16-36 (CIVA…LVAW) and 236-256 (VWYA…LCYY). The region spanning 261–514 (RMRPGREIMT…DFVRWLKKPY (254 aa)) is the EAL domain.

It is found in the cell inner membrane. It catalyses the reaction 3',3'-c-di-GMP + H2O = 5'-phosphoguanylyl(3'-&gt;5')guanosine + H(+). Functionally, phosphodiesterase (PDE) that catalyzes the hydrolysis of cyclic-di-GMP (c-di-GMP) to 5'-pGpG. The sequence is that of Probable cyclic di-GMP phosphodiesterase PdeN from Escherichia coli (strain K12).